The following is an 801-amino-acid chain: Na(+)/H(+) antiporter subunit A (801 aa).

The next 21 membrane-spanning stretches (helical) occupy residues 4-21 (LHLAILSPFLFAFIIPFL), 28-50 (VHTGWFVLILPVLLFIYFLPMIR), 80-102 (GLLFALLITGIGSLVTLYSIFYL), 109-128 (LGPFYVYLLMFMGAMLGVVL), 132-154 (VMVLYMFWELTSLSSFLLIGYWY), 166-188 (SLLITVSGGLCMLGGFILLYLIT), 203-222 (IAGHELFIPAMILILLGAFT), 229-251 (FYIWLPDAMEAPTPVSAYLHSAT), 266-288 (IFAFSAQWFWIVSLVGLFTMVWG), 301-323 (ILAFSTVSQLGMIISMLGVSAAA), 338-360 (AAIFHLINHATFKGSLFMAVGII), 372-394 (LGGLMAIMPITFTISLIGTFSMA), 428-450 (VLFPLFAWIGSVFTFIYSMKLLF), 471-493 (VGMLVPPVILVALAVSLFFFPNI), 526-548 (GVTTELLMTAGIVVIGTIGYLSL), 594-616 (YLLYIFAGFIILIGGAFAIKGGF), 626-647 (IGVYEIILTLVMISATVATVFA), 654-671 (IIALGVVGYTLALFFVIF), 676-698 (LALTQLVIETISVALFLLCFYHL), 710-732 (FRMTNFIISLGVGVIVTLLGIAS), and 772-789 (MFEITVLTIAALGIYSMI).

Belongs to the CPA3 antiporters (TC 2.A.63) subunit A family. In terms of assembly, forms a heterooligomeric complex that consists of seven subunits: MrpA, MrpB, MrpC, MrpD, MrpE, MrpF and MrpG.

The protein localises to the cell membrane. Functionally, mrp complex is a Na(+)/H(+) antiporter that is considered to be the major Na(+) excretion system in B.subtilis. Has a major role in Na(+) resistance and a minor role in Na(+)- and K(+)-dependent pH homeostasis as compared to TetB. MrpA may be the actual Na(+)/H(+) antiporter, although the six other Mrp proteins are all required for Na(+)/H(+) antiport activity and Na(+) resistance. MrpA is required for initiation of sporulation when external Na(+) concentration increases. Also transports Li(+) but not K(+), Ca(2+) or Mg(2+). The chain is Na(+)/H(+) antiporter subunit A (mrpA) from Bacillus subtilis (strain 168).